The following is a 256-amino-acid chain: Ciliary microtubule associated protein 1A (256 aa).

3 STPGR repeats span residues 66–92 (PGPG…IYGR), 181–206 (PGPG…MTAR), and 217–242 (PGPG…FGIR).

The protein belongs to the CIMAP family.

The protein resides in the cytoplasm. Its subcellular location is the cytoskeleton. The protein localises to the flagellum axoneme. Outer dense fibers are filamentous structures located on the outside of the axoneme in the midpiece and principal piece of the mammalian sperm tail. May help to maintain the passive elastic structures and elastic recoil of the sperm tail. In Xenopus tropicalis (Western clawed frog), this protein is Ciliary microtubule associated protein 1A (cimap1a).